A 146-amino-acid polypeptide reads, in one-letter code: Globin (146 aa).

Ser1 is modified (N-acetylserine). The Globin domain occupies 1-146 (SLSGAEADLL…IIDALKKAGK (146 aa)). His95 serves as a coordination point for heme b.

The protein belongs to the globin family. Monomer.

In Bursatella leachii (Ragged sea hare), this protein is Globin.